The following is a 160-amino-acid chain: Ribonuclease P protein component 2 (160 aa).

This sequence belongs to the eukaryotic/archaeal RNase P protein component 2 family. In terms of assembly, consists of a catalytic RNA component and at least 4-5 protein subunits.

It is found in the cytoplasm. The catalysed reaction is Endonucleolytic cleavage of RNA, removing 5'-extranucleotides from tRNA precursor.. Part of ribonuclease P, a protein complex that generates mature tRNA molecules by cleaving their 5'-ends. The chain is Ribonuclease P protein component 2 from Methanoculleus marisnigri (strain ATCC 35101 / DSM 1498 / JR1).